Here is a 440-residue protein sequence, read N- to C-terminus: Armadillo-like helical domain containing protein 1 (440 aa).

This chain is Armadillo-like helical domain containing protein 1, found in Homo sapiens (Human).